We begin with the raw amino-acid sequence, 380 residues long: Queuine tRNA-ribosyltransferase (380 aa).

The Proton acceptor role is filled by D95. Substrate-binding positions include 95 to 99 (DSGGF), D149, Q192, and G219. Residues 250–256 (GVGSPDS) form an RNA binding region. The Nucleophile role is filled by D269. The RNA binding; important for wobble base 34 recognition stretch occupies residues 274 to 278 (TRIGR). Zn(2+)-binding residues include C307, C309, C312, and H338.

The protein belongs to the queuine tRNA-ribosyltransferase family. In terms of assembly, homodimer. Within each dimer, one monomer is responsible for RNA recognition and catalysis, while the other monomer binds to the replacement base PreQ1. Zn(2+) serves as cofactor.

It catalyses the reaction 7-aminomethyl-7-carbaguanine + guanosine(34) in tRNA = 7-aminomethyl-7-carbaguanosine(34) in tRNA + guanine. Its pathway is tRNA modification; tRNA-queuosine biosynthesis. Catalyzes the base-exchange of a guanine (G) residue with the queuine precursor 7-aminomethyl-7-deazaguanine (PreQ1) at position 34 (anticodon wobble position) in tRNAs with GU(N) anticodons (tRNA-Asp, -Asn, -His and -Tyr). Catalysis occurs through a double-displacement mechanism. The nucleophile active site attacks the C1' of nucleotide 34 to detach the guanine base from the RNA, forming a covalent enzyme-RNA intermediate. The proton acceptor active site deprotonates the incoming PreQ1, allowing a nucleophilic attack on the C1' of the ribose to form the product. After dissociation, two additional enzymatic reactions on the tRNA convert PreQ1 to queuine (Q), resulting in the hypermodified nucleoside queuosine (7-(((4,5-cis-dihydroxy-2-cyclopenten-1-yl)amino)methyl)-7-deazaguanosine). This Geobacillus thermodenitrificans (strain NG80-2) protein is Queuine tRNA-ribosyltransferase.